A 20-amino-acid chain; its full sequence is Isocitrate dehydrogenase [NADP] (20 aa).

It belongs to the isocitrate and isopropylmalate dehydrogenases family. The cofactor is Mn(2+). Mg(2+) is required as a cofactor.

It is found in the cytoplasm. It catalyses the reaction D-threo-isocitrate + NADP(+) = 2-oxoglutarate + CO2 + NADPH. The protein is Isocitrate dehydrogenase [NADP] of Naegleria fowleri (Brain eating amoeba).